The sequence spans 767 residues: DNA topoisomerase 1 (767 aa).

Residues 1–23 (MSGDHLHNDSQIEADFRLNDSHK) are compositionally biased toward basic and acidic residues. The segment at 1 to 201 (MSGDHLHNDS…NKKKKPKKEE (201 aa)) is disordered. N-acetylserine is present on S2. Phosphoserine occurs at positions 2 and 10. Residues 24–39 (HKDKHKDREHRHKEHK) are compositionally biased toward basic residues. The span at 40–110 (KDKEKDREKS…DAKIKKEKEN (71 aa)) shows a compositional bias: basic and acidic residues. Phosphoserine is present on S59. K103 is covalently cross-linked (Glycyl lysine isopeptide (Lys-Gly) (interchain with G-Cter in SUMO2)). Residue K105 forms a Glycyl lysine isopeptide (Lys-Gly) (interchain with G-Cter in SUMO); alternate linkage. K105 is covalently cross-linked (Glycyl lysine isopeptide (Lys-Gly) (interchain with G-Cter in SUMO2); alternate). S114 is modified (phosphoserine). A Glycyl lysine isopeptide (Lys-Gly) (interchain with G-Cter in SUMO); alternate cross-link involves residue K119. Residue K119 forms a Glycyl lysine isopeptide (Lys-Gly) (interchain with G-Cter in SUMO2); alternate linkage. K119 is covalently cross-linked (Glycyl lysine isopeptide (Lys-Gly) (interchain with G-Cter in SUMO1); alternate). Basic and acidic residues predominate over residues 131–168 (PKEDIKPLKRPRDEDDADYKPKKIKTEDIKKEKKRKLE). Residues K136 and K150 each participate in a glycyl lysine isopeptide (Lys-Gly) (interchain with G-Cter in SUMO2) cross-link. Residue K155 forms a Glycyl lysine isopeptide (Lys-Gly) (interchain with G-Cter in SUMO); alternate linkage. K155 participates in a covalent cross-link: Glycyl lysine isopeptide (Lys-Gly) (interchain with G-Cter in SUMO2); alternate. Residues K160 and K166 each participate in a glycyl lysine isopeptide (Lys-Gly) (interchain with G-Cter in SUMO2) cross-link. A Glycyl lysine isopeptide (Lys-Gly) (interchain with G-Cter in SUMO2); alternate cross-link involves residue K174. K174 carries the N6-acetyllysine; alternate modification. Residues 181–201 (KDKDKKGAESDNKKKKPKKEE) are compositionally biased toward basic and acidic residues. Residue K206 forms a Glycyl lysine isopeptide (Lys-Gly) (interchain with G-Cter in SUMO2) linkage. K282 is modified (N6-acetyllysine). K338 participates in a covalent cross-link: Glycyl lysine isopeptide (Lys-Gly) (interchain with G-Cter in SUMO2). 2 interaction with DNA regions span residues 427-428 (KY) and 490-495 (RAGNEK). In terms of domain architecture, Topo IB-type catalytic spans 434 to 767 (SSRIKGEKDW…IDMTDEDYEF (334 aa)). At S508 the chain carries Phosphoserine; by CK2. A Glycyl lysine isopeptide (Lys-Gly) (interchain with G-Cter in SUMO2) cross-link involves residue K551. The tract at residues 587-589 (TAK) is interaction with DNA. Glycyl lysine isopeptide (Lys-Gly) (interchain with G-Cter in SUMO2) cross-links involve residues K644, K702, and K714. Y725 (O-(3'-phospho-DNA)-tyrosine intermediate) is an active-site residue.

This sequence belongs to the type IB topoisomerase family. In terms of assembly, monomer. Interacts with ERCC6. Interacts with TPRN; TPRN interacts with a number of DNA damage response proteins, is recruited to sites of DNA damage and may play a role in DNA damage repair. Sumoylated. Lys-119 is the main site of sumoylation. Sumoylation plays a role in partitioning TOP1 between nucleoli and nucleoplasm. Levels are dramatically increased on camptothecin (CPT) treatment. Post-translationally, phosphorylation at Ser-508 by CK2 increases binding to supercoiled DNA and sensitivity to camptothecin.

The protein localises to the nucleus. It localises to the nucleolus. The protein resides in the nucleoplasm. It catalyses the reaction ATP-independent breakage of single-stranded DNA, followed by passage and rejoining.. With respect to regulation, specifically inhibited by camptothecin (CPT), a plant alkaloid with antitumor activity. In terms of biological role, releases the supercoiling and torsional tension of DNA introduced during the DNA replication and transcription by transiently cleaving and rejoining one strand of the DNA duplex. Introduces a single-strand break via transesterification at a target site in duplex DNA. The scissile phosphodiester is attacked by the catalytic tyrosine of the enzyme, resulting in the formation of a DNA-(3'-phosphotyrosyl)-enzyme intermediate and the expulsion of a 5'-OH DNA strand. The free DNA strand then rotates around the intact phosphodiester bond on the opposing strand, thus removing DNA supercoils. Finally, in the religation step, the DNA 5'-OH attacks the covalent intermediate to expel the active-site tyrosine and restore the DNA phosphodiester backbone. Regulates the alternative splicing of tissue factor (F3) pre-mRNA in endothelial cells. Involved in the circadian transcription of the core circadian clock component BMAL1 by altering the chromatin structure around the ROR response elements (ROREs) on the BMAL1 promoter. This is DNA topoisomerase 1 (TOP1) from Cricetulus griseus (Chinese hamster).